The sequence spans 209 residues: COP9 signalosome complex subunit 8 (209 aa).

A PCI domain is found at 8–179; sequence DNAFSFRKLL…GTLDVSLNRF (172 aa). Ser175 bears the Phosphoserine mark.

Belongs to the CSN8 family. Component of the CSN complex, composed of COPS1/GPS1, COPS2, COPS3, COPS4, COPS5, COPS6, COPS7 (COPS7A or COPS7B), COPS8 and COPS9. In the complex, it probably interacts directly with COPS3, COPS4 and COPS7 (COPS7A or COPS7B). As to expression, widely expressed.

Its subcellular location is the cytoplasm. It localises to the nucleus. Component of the COP9 signalosome complex (CSN), a complex involved in various cellular and developmental processes. The CSN complex is an essential regulator of the ubiquitin (Ubl) conjugation pathway by mediating the deneddylation of the cullin subunits of SCF-type E3 ligase complexes, leading to decrease the Ubl ligase activity of SCF-type complexes such as SCF, CSA or DDB2. The complex is also involved in phosphorylation of p53/TP53, c-jun/JUN, IkappaBalpha/NFKBIA, ITPK1 and IRF8/ICSBP, possibly via its association with CK2 and PKD kinases. CSN-dependent phosphorylation of TP53 and JUN promotes and protects degradation by the Ubl system, respectively. The polypeptide is COP9 signalosome complex subunit 8 (Cops8) (Mus musculus (Mouse)).